The primary structure comprises 360 residues: DNA integrity scanning protein DisA (360 aa).

Positions 9–147 (DNDLMDILNI…NNIKYVLRDS (139 aa)) constitute a DAC domain. Residues G76, L94, and 107-111 (TRHRT) each bind ATP.

The protein belongs to the DisA family. As to quaternary structure, homooctamer. It depends on Mg(2+) as a cofactor.

The catalysed reaction is 2 ATP = 3',3'-c-di-AMP + 2 diphosphate. Functionally, participates in a DNA-damage check-point that is active prior to asymmetric division when DNA is damaged. DisA forms globular foci that rapidly scan along the chromosomes during sporulation, searching for lesions. When a lesion is present, DisA pauses at the lesion site. This triggers a cellular response that culminates in a temporary block in sporulation initiation. In terms of biological role, also has diadenylate cyclase activity, catalyzing the condensation of 2 ATP molecules into cyclic di-AMP (c-di-AMP). c-di-AMP acts as a signaling molecule that couples DNA integrity with progression of sporulation. The rise in c-di-AMP level generated by DisA while scanning the chromosome, operates as a positive signal that advances sporulation; upon encountering a lesion, the DisA focus arrests at the damaged site and halts c-di-AMP synthesis. The chain is DNA integrity scanning protein DisA from Clostridium tetani (strain Massachusetts / E88).